Consider the following 732-residue polypeptide: MKFDKPAGENPIDQLKVVGRPHDRIDGPLKTTGTARYAYEWHEESPNAAYGYIVGSAIAKGRLTALDTDAAQKAPGVLPVITASNAGALSKGDKNTARLLGGPTIEHYHQAIALVVAETFEQARAAASLVQAHYRRNKGAYSLADEKQAVSQPPEDTPDKNVGDFDGAFSSAAVKIDATYTTPDQSHMAMEPHASMAVWDGNKLTLWTSNQMIDWCRTDLAKTLKVPVENVRIISPYIGGGFGGKLFLRSDALLAALAARAVKRPVKVMLPRPSIPNNTTHRPATLQHLRIGADQSGKITAISHESWSGNLPGGTPETAVQQSELLYAGANRHTGLRLATLDLPEGNAMRAPGEAPGLMALEIAIDELAEKAGIDPVEFRILNDTQIDPADPTRRFSRRQLIECLRTGADKFGWKQRNATPGQVRDGEWLVGHGVAAGFRNNLLEKSGARVHLEPNGTVTVETDMTDIGTGSYTILAQTAAEMLGVPLEQVAVHLGDSSFPVSAGSGGQWGANTSTSGVYAACVKLREMIASAVGFDPEQSQFADGKITNGTRSAILHEATAGGRLTAEESIEFGTLSKEYQQSTFAGHFVEVGVHSATGEVRVRRMLAVCAAGRILNPKTARSQVIGAMTMGMGAALMEELAVDDRLGYFVNHDMAGYEVPVHADIPKQEVIFLDDTDPISSPMKAKGVGELGLCGVSAAIANAVYNATGIRVRDYPITLDKLLDKLPDVV.

Mo-molybdopterin cytosine dinucleotide contacts are provided by residues 241–242 (GF), 468–470 (IGT), 511–512 (GA), 615–621 (RILNPKT), Q625, and 688–691 (KGVG). E692 (proton acceptor) is an active-site residue.

It belongs to the xanthine dehydrogenase family. In terms of assembly, heterotrimer composed of PaoA, PaoB and PaoC. It depends on Mo-molybdopterin cytosine dinucleotide as a cofactor.

Its subcellular location is the periplasm. It catalyses the reaction an aldehyde + A + H2O = a carboxylate + AH2 + H(+). In terms of biological role, oxidizes aldehydes to the corresponding carboxylic acids with a preference for aromatic aldehydes. It might play a role in the detoxification of aldehydes to avoid cell damage. The sequence is that of Aldehyde oxidoreductase molybdenum-binding subunit PaoC from Escherichia coli O157:H7.